The chain runs to 122 residues: Large ribosomal subunit protein bL12 (122 aa).

It belongs to the bacterial ribosomal protein bL12 family. In terms of assembly, homodimer. Part of the ribosomal stalk of the 50S ribosomal subunit. Forms a multimeric L10(L12)X complex, where L10 forms an elongated spine to which 2 to 4 L12 dimers bind in a sequential fashion. Binds GTP-bound translation factors.

Functionally, forms part of the ribosomal stalk which helps the ribosome interact with GTP-bound translation factors. Is thus essential for accurate translation. This is Large ribosomal subunit protein bL12 from Yersinia pseudotuberculosis serotype O:1b (strain IP 31758).